The sequence spans 564 residues: Arginine--tRNA ligase (564 aa).

Residues 136–146 (ANPTGPLHMGN) carry the 'HIGH' region motif.

This sequence belongs to the class-I aminoacyl-tRNA synthetase family. In terms of assembly, monomer.

The protein localises to the cytoplasm. The enzyme catalyses tRNA(Arg) + L-arginine + ATP = L-arginyl-tRNA(Arg) + AMP + diphosphate. The sequence is that of Arginine--tRNA ligase from Acetivibrio thermocellus (strain ATCC 27405 / DSM 1237 / JCM 9322 / NBRC 103400 / NCIMB 10682 / NRRL B-4536 / VPI 7372) (Clostridium thermocellum).